The following is a 199-amino-acid chain: MAKVLVLYYSTYGHIEQMAHAVAEGAREAGAEVDVKRVPELVPEDVARKSHFKLDQSAPLARVDELPNYDAIIFGTPTRYGNMASQMKNFLDQTGGLWMKGALVGKVGSVFTSSASQHGGQESTILSFHTVLLHHGMVLVGLPYAFQGQLGVSQVMGNSPYGASTIADGDGSRQPSPIELDGARYQGRHVAGIAAKLAG.

One can recognise a Flavodoxin-like domain in the interval 4 to 190 (VLVLYYSTYG…DGARYQGRHV (187 aa)). Residues 10–15 (STYGHI) and 78–80 (TRY) each bind FMN. Position 12 (Tyr12) interacts with NAD(+). Trp98 lines the substrate pocket. Residues 113-119 (SSASQHG) and His134 contribute to the FMN site.

Belongs to the WrbA family. Requires FMN as cofactor.

The catalysed reaction is a quinone + NADH + H(+) = a quinol + NAD(+). The enzyme catalyses a quinone + NADPH + H(+) = a quinol + NADP(+). The polypeptide is NAD(P)H dehydrogenase (quinone) (Methylobacterium sp. (strain 4-46)).